The sequence spans 445 residues: Phosphoglucosamine mutase (445 aa).

The Phosphoserine intermediate role is filled by Ser101. Positions 101, 240, 242, and 244 each coordinate Mg(2+). Ser101 carries the phosphoserine modification.

The protein belongs to the phosphohexose mutase family. Mg(2+) is required as a cofactor. In terms of processing, activated by phosphorylation.

It catalyses the reaction alpha-D-glucosamine 1-phosphate = D-glucosamine 6-phosphate. Its function is as follows. Catalyzes the conversion of glucosamine-6-phosphate to glucosamine-1-phosphate. The polypeptide is Phosphoglucosamine mutase (Pseudomonas fluorescens (strain ATCC BAA-477 / NRRL B-23932 / Pf-5)).